The chain runs to 105 residues: Cyclotide vibi-J (105 aa).

The first 9 residues, 1-9, serve as a signal peptide directing secretion; sequence AAFALPALA. The propeptide occupies 10–71; sequence TSFEKDFITH…KSSNSINALG (62 aa). Residues 72–102 constitute a cross-link (cyclopeptide (Gly-Asn)); it reads GTFPCGESCVWIPCISKVIGCACKSKVCYKN. Intrachain disulfides connect cysteine 76-cysteine 92, cysteine 80-cysteine 94, and cysteine 85-cysteine 99. The propeptide occupies 103 to 105; the sequence is SLA.

In terms of processing, this is a cyclic peptide.

Functionally, probably participates in a plant defense mechanism. The polypeptide is Cyclotide vibi-J (Viola biflora (Yellow wood violet)).